Reading from the N-terminus, the 240-residue chain is Uridylate kinase (240 aa).

Lysine 13 to glycine 16 provides a ligand contact to ATP. The segment at glycine 21–glycine 26 is involved in allosteric activation by GTP. Glycine 55 provides a ligand contact to UMP. Glycine 56 and arginine 60 together coordinate ATP. Residues aspartate 75 and threonine 136–threonine 143 contribute to the UMP site. The ATP site is built by threonine 163, glutamine 164, tyrosine 169, and aspartate 172.

The protein belongs to the UMP kinase family. As to quaternary structure, homohexamer.

Its subcellular location is the cytoplasm. It carries out the reaction UMP + ATP = UDP + ADP. Its pathway is pyrimidine metabolism; CTP biosynthesis via de novo pathway; UDP from UMP (UMPK route): step 1/1. With respect to regulation, allosterically activated by GTP. Inhibited by UTP. In terms of biological role, catalyzes the reversible phosphorylation of UMP to UDP. This chain is Uridylate kinase, found in Brucella abortus biovar 1 (strain 9-941).